A 307-amino-acid chain; its full sequence is ATP synthase gamma chain (307 aa).

Belongs to the ATPase gamma chain family. As to quaternary structure, F-type ATPases have 2 components, CF(1) - the catalytic core - and CF(0) - the membrane proton channel. CF(1) has five subunits: alpha(3), beta(3), gamma(1), delta(1), epsilon(1). CF(0) has three main subunits: a, b and c.

The protein localises to the cell membrane. Its function is as follows. Produces ATP from ADP in the presence of a proton gradient across the membrane. The gamma chain is believed to be important in regulating ATPase activity and the flow of protons through the CF(0) complex. In Bifidobacterium longum subsp. infantis (strain ATCC 15697 / DSM 20088 / JCM 1222 / NCTC 11817 / S12), this protein is ATP synthase gamma chain.